The primary structure comprises 2510 residues: Highly reducing polyketide synthase g433 (2510 aa).

The interval 1-54 is disordered; that stretch reads MAPGRTDVTVAENGNGLHTAHNGVSNGTSNGTNGTSHTSNGTNSSAKTTSNGVH. Residues 22–45 are compositionally biased toward low complexity; the sequence is NGVSNGTSNGTNGTSHTSNGTNSS. The region spanning 58–477 is the Ketosynthase family 3 (KS3) domain; that stretch reads DIPIAIVGMG…GANAHAVIDS (420 aa). Active-site for beta-ketoacyl synthase activity residues include Cys229, His365, and His400. Positions 574–880 are malonyl-CoA:ACP transacylase (MAT) domain; that stretch reads FVFTGQGAQW…VPTLVRGQND (307 aa). The N-terminal hotdog fold stretch occupies residues 942–1070; that stretch reads HDLLGCQVFE…GQVKAGRADS (129 aa). The dehydratase (DH) domain stretch occupies residues 942 to 1226; sequence HDLLGCQVFE…NLRLAPAADD (285 aa). The PKS/mFAS DH domain occupies 942–1229; sequence HDLLGCQVFE…LAPAADDTGG (288 aa). His974 (proton acceptor; for dehydratase activity) is an active-site residue. Positions 1083 to 1229 are C-terminal hotdog fold; it reads PRKVSSTRWY…LAPAADDTGG (147 aa). Asp1144 serves as the catalytic Proton donor; for dehydratase activity. The tract at residues 1395-1574 is methyltransferase (CMet) domain; it reads DFLGLVSHDK…FDGAEAVIYD (180 aa). Positions 1787-2097 are enoyl reductase (ER) (ER) domain; sequence GSLKTLRWVQ…KGQHMGKLVI (311 aa). Residues 2122–2296 are ketoreductase (KR) domain; the sequence is SYLLVGGLGG…ASVLDISIIE (175 aa). One can recognise a Carrier domain in the interval 2419 to 2496; the sequence is SSVSFLANEI…KLGEAAAEGL (78 aa). An O-(pantetheine 4'-phosphoryl)serine modification is found at Ser2456.

The protein operates within mycotoxin biosynthesis. Its function is as follows. Highly reducing polyketide synthase; part of the gene cluster that mediates the biosynthesis of 1233A, a natural compound known as an inhibitor of HMG-CoA synthase in the mevalonate pathway and with antibacterial and antifungal activities. The highly reducing polyketide synthase g433 gene is responsible for the 1233A backbone biosynthesis and the cytochrome P450 monooxygenase g430 catalyzes oxidation of the backbone. This is Highly reducing polyketide synthase g433 from Fusarium sp.